The chain runs to 335 residues: Zinc-type alcohol dehydrogenase-like protein SAR2277 (335 aa).

It belongs to the zinc-containing alcohol dehydrogenase family. Quinone oxidoreductase subfamily.

The polypeptide is Zinc-type alcohol dehydrogenase-like protein SAR2277 (Staphylococcus aureus (strain MRSA252)).